The chain runs to 440 residues: Alpha-ionylideneethane synthase aba3 (440 aa).

The protein belongs to the alpha-ionylideneethane synthase family.

The protein operates within hormone biosynthesis. Alpha-ionylideneethane synthase; part of the gene cluster that mediates the biosynthesis of abscisic acid (ABA), a phytohormone that acts antagonistically toward salicylic acid (SA), jasmonic acid (JA) and ethylene (ETH) signaling, to impede plant defense responses. The first step of the pathway catalyzes the reaction from farnesyl diphosphate to alpha-ionylideneethane performed by the alpha-ionylideneethane synthase aba3 via a three-step reaction mechanism involving 2 neutral intermediates, beta-farnesene and allofarnesene. The cytochrome P450 monooxygenase aba1 might then be involved in the conversion of alpha-ionylideneethane to alpha-ionylideneacetic acid. Alpha-ionylideneacetic acid is further converted to abscisic acid in 2 steps involving the cytochrome P450 monooxygenase aba2 and the short-chain dehydrogenase/reductase aba4, via the intermediates 1'-deoxy-ABA or 1',4'-trans-diol-ABA, depending on the order of action of these 2 enzymes. Aba2 is responsible for the hydroxylation of carbon atom C-1' and aba4 might be involved in the oxidation of the C-4' carbon atom. The protein is Alpha-ionylideneethane synthase aba3 of Botryotinia fuckeliana (strain B05.10) (Noble rot fungus).